The following is a 354-amino-acid chain: Membrane progestin receptor beta (354 aa).

Over 1-75 the chain is Cytoplasmic; sequence MTTAILQRLS…FFSLFQKHNE (75 aa). The chain crosses the membrane as a helical span at residues 76–96; that stretch reads VVNVWTHLLAALAVLLRFWAF. Residues 97–111 are Extracellular-facing; that stretch reads VETEGLPWTSAHTLP. A helical membrane pass occupies residues 112-132; sequence LLLYVLSSITYLTFSLLAHLL. The Cytoplasmic segment spans residues 133–174; the sequence is QSKSELSHYTFYFVDYVGVSVYQYGSALVHFFYASDQAWYER. Residues 175–195 traverse the membrane as a helical segment; that stretch reads FWLFFLPAAAFCGWLSCTGCC. Residues 196–213 are Extracellular-facing; it reads YAKYRYRRPYPVMRKVCQ. A helical membrane pass occupies residues 214–234; the sequence is VVPAGLAFILDISPVAHRVAL. Residues 235-243 lie on the Cytoplasmic side of the membrane; it reads CHLSGCQEQ. A helical transmembrane segment spans residues 244–264; sequence AAWYHTLQIVFFLVSAYFFSC. The Extracellular segment spans residues 265–283; the sequence is PVPEKYFPGSCDIVGHGHQ. A helical membrane pass occupies residues 284–304; the sequence is IFHAFLSICTLSQLEAILLDY. Residues 305 to 319 are Cytoplasmic-facing; it reads KGRQEIFLHRHSPLS. The chain crosses the membrane as a helical span at residues 320–340; that stretch reads IYAACLSFFFLVACSGATAAL. The Extracellular segment spans residues 341-354; sequence LREKIKARLSKKDS.

Belongs to the ADIPOR family.

It localises to the cell membrane. Steroid membrane receptor. Binds progesterone. May be involved in oocyte maturation. This Sus scrofa (Pig) protein is Membrane progestin receptor beta (PAQR8).